Reading from the N-terminus, the 169-residue chain is E1B protein, small T-antigen (169 aa).

This sequence belongs to the adenoviridae E1B 19 kDa protein family.

The sequence is that of E1B protein, small T-antigen from Canis lupus familiaris (Dog).